The primary structure comprises 520 residues: Ribonuclease Y (520 aa).

The chain crosses the membrane as a helical span at residues 5–25 (ITIISSLLFLIVGLVVGSLIF). The tract at residues 76–127 (ELRGRRTETQKAENRLLQREENLDRKDTSLSKREATLERKEESISKRQQQIE) is disordered. The region spanning 210–273 (TVSVVTLPND…EIARIALEKL (64 aa)) is the KH domain. Residues 336-429 (VLNHSLEVSK…VAAADALSAA (94 aa)) enclose the HD domain.

Belongs to the RNase Y family.

The protein localises to the cell membrane. Endoribonuclease that initiates mRNA decay. This chain is Ribonuclease Y, found in Listeria monocytogenes serotype 1/2a (strain 10403S).